The primary structure comprises 1088 residues: Restriction of telomere capping protein 1 (1088 aa).

Residues 26–56 (NSSTPQSHEISPSSSLSSSRSKKQTSQYNTQ) form a disordered region. The span at 27 to 44 (SSTPQSHEISPSSSLSSS) shows a compositional bias: low complexity. 7 WD repeats span residues 131–170 (APNK…QSKV), 176–215 (DHNR…TKPV), 222–266 (LHSD…GGKV), 275–314 (LHTG…SRNT), 367–417 (DPTI…TFSS), 432–473 (IEDL…TTEE), and 502–546 (DKPQ…SSIP). Residues 537–560 (DSATSSSSIPNMQVSSSRPKLTRN) show a composition bias toward polar residues. The interval 537-597 (DSATSSSSIP…SPQYKKNNPP (61 aa)) is disordered. Residues 561-572 (TSQTTQDSSSSQ) show a composition bias toward low complexity. Residues 582 to 593 (ASQTYSSPQYKK) show a composition bias toward polar residues. A WD 8 repeat occupies 631-671 (STPDGFTLVDVCLLNASVAASVGNNRTSQIWRLLAVSIQEE). Residues 709–732 (AETTNSNFVESFKSTSTSGSQFGK) show a composition bias toward polar residues. Disordered stretches follow at residues 709-751 (AETT…GNLM), 764-829 (SATS…FSPP), and 844-871 (SLAS…SPPV). Residues 769–794 (KFKEQERKEDESQKAQSIKDENERAS) are compositionally biased toward basic and acidic residues. Over residues 796 to 806 (HSKSAPISISS) the composition is skewed to polar residues. The segment at 1040–1083 (CVYCNEPCKGLAVTVGLKCGHHGHFGCLKEWFIEDQNTECPGGC) adopts an RING-type; degenerate zinc-finger fold.

Belongs to the WD repeat RTC1 family.

The protein localises to the vacuole. May be involved in a process influencing telomere capping. The polypeptide is Restriction of telomere capping protein 1 (RTC1) (Candida albicans (strain SC5314 / ATCC MYA-2876) (Yeast)).